We begin with the raw amino-acid sequence, 430 residues long: C4-dicarboxylate transport protein (430 aa).

8 consecutive transmembrane segments (helical) span residues 9–29, 45–65, 79–99, 149–169, 185–205, 223–243, 308–328, and 356–376; these read VLYV…HFYP, LIKM…IAGM, LLYF…ATHL, GEIL…AHLG, VLFG…FGAM, LIGT…GAIA, IYMT…LTWM, and AATL…ILGI.

The protein belongs to the dicarboxylate/amino acid:cation symporter (DAACS) (TC 2.A.23) family.

Its subcellular location is the cell inner membrane. In terms of biological role, responsible for the transport of dicarboxylates such as succinate, fumarate, and malate from the periplasm across the membrane. The sequence is that of C4-dicarboxylate transport protein from Burkholderia orbicola (strain AU 1054).